We begin with the raw amino-acid sequence, 513 residues long: GMP synthase [glutamine-hydrolyzing] (513 aa).

Positions 8–198 constitute a Glutamine amidotransferase type-1 domain; sequence KIIVLDYGSQ…ALNICGAKGN (191 aa). Catalysis depends on cysteine 85, which acts as the Nucleophile. Residues histidine 172 and glutamate 174 contribute to the active site. Residues 199–388 form the GMPS ATP-PPase domain; it reads WSMENFIDMQ…LGMPDEIVWR (190 aa). 226 to 232 contacts ATP; the sequence is SGGVDSS.

In terms of assembly, homodimer.

It catalyses the reaction XMP + L-glutamine + ATP + H2O = GMP + L-glutamate + AMP + diphosphate + 2 H(+). It participates in purine metabolism; GMP biosynthesis; GMP from XMP (L-Gln route): step 1/1. Functionally, catalyzes the synthesis of GMP from XMP. This Lactococcus lactis subsp. lactis (strain IL1403) (Streptococcus lactis) protein is GMP synthase [glutamine-hydrolyzing] (guaA).